We begin with the raw amino-acid sequence, 373 residues long: Anhydro-N-acetylmuramic acid kinase (373 aa).

Position 12–19 (12–19 (GTSLDGVD)) interacts with ATP.

Belongs to the anhydro-N-acetylmuramic acid kinase family.

The catalysed reaction is 1,6-anhydro-N-acetyl-beta-muramate + ATP + H2O = N-acetyl-D-muramate 6-phosphate + ADP + H(+). It participates in amino-sugar metabolism; 1,6-anhydro-N-acetylmuramate degradation. The protein operates within cell wall biogenesis; peptidoglycan recycling. In terms of biological role, catalyzes the specific phosphorylation of 1,6-anhydro-N-acetylmuramic acid (anhMurNAc) with the simultaneous cleavage of the 1,6-anhydro ring, generating MurNAc-6-P. Is required for the utilization of anhMurNAc either imported from the medium or derived from its own cell wall murein, and thus plays a role in cell wall recycling. The protein is Anhydro-N-acetylmuramic acid kinase of Salmonella dublin (strain CT_02021853).